A 1073-amino-acid chain; its full sequence is Probable inorganic carbon transporter subunit DabA 2 (1073 aa).

Over residues 1 to 20 (MSSGNTSSQNHSPVNNQPTR) the composition is skewed to polar residues. The interval 1–35 (MSSGNTSSQNHSPVNNQPTRLKSPLPALHKDTQPN) is disordered. Positions 535, 537, 721, and 736 each coordinate Zn(2+).

It belongs to the inorganic carbon transporter (TC 9.A.2) DabA family. Forms a complex with DabB. It depends on Zn(2+) as a cofactor.

Its subcellular location is the cell inner membrane. Functionally, part of an energy-coupled inorganic carbon pump. The chain is Probable inorganic carbon transporter subunit DabA 2 from Rhodopirellula baltica (strain DSM 10527 / NCIMB 13988 / SH1).